A 573-amino-acid polypeptide reads, in one-letter code: Pyrophosphate--fructose 6-phosphate 1-phosphotransferase (573 aa).

Diphosphate is bound at residue G90. D184 contributes to the Mg(2+) binding site. Substrate contacts are provided by residues T212 to D214, K251 to Y252, M259 to R261, E320, and Y434 to R437. The active-site Proton acceptor is the D214.

It belongs to the phosphofructokinase type A (PFKA) family. PPi-dependent PFK group II subfamily. Clade 'Long' sub-subfamily. In terms of assembly, homodimer. The cofactor is Mg(2+).

Its subcellular location is the cytoplasm. It catalyses the reaction beta-D-fructose 6-phosphate + diphosphate = beta-D-fructose 1,6-bisphosphate + phosphate + H(+). It participates in carbohydrate degradation; glycolysis; D-glyceraldehyde 3-phosphate and glycerone phosphate from D-glucose: step 3/4. Its activity is regulated as follows. Non-allosteric. Its function is as follows. Catalyzes the phosphorylation of D-fructose 6-phosphate, the first committing step of glycolysis. Uses inorganic phosphate (PPi) as phosphoryl donor instead of ATP like common ATP-dependent phosphofructokinases (ATP-PFKs), which renders the reaction reversible, and can thus function both in glycolysis and gluconeogenesis. Consistently, PPi-PFK can replace the enzymes of both the forward (ATP-PFK) and reverse (fructose-bisphosphatase (FBPase)) reactions. In Treponema pallidum (strain Nichols), this protein is Pyrophosphate--fructose 6-phosphate 1-phosphotransferase.